Consider the following 593-residue polypeptide: Aspartate--tRNA(Asp/Asn) ligase (593 aa).

Glu173 is an L-aspartate binding site. An aspartate region spans residues 197 to 200 (QLFK). Position 219 (Arg219) interacts with L-aspartate. ATP is bound by residues 219 to 221 (RDE) and Gln228. His451 serves as a coordination point for L-aspartate. An ATP-binding site is contributed by Glu485. An L-aspartate-binding site is contributed by Arg492. 537-540 (GIDR) is a binding site for ATP.

This sequence belongs to the class-II aminoacyl-tRNA synthetase family. Type 1 subfamily. Homodimer.

Its subcellular location is the cytoplasm. The enzyme catalyses tRNA(Asx) + L-aspartate + ATP = L-aspartyl-tRNA(Asx) + AMP + diphosphate. Functionally, aspartyl-tRNA synthetase with relaxed tRNA specificity since it is able to aspartylate not only its cognate tRNA(Asp) but also tRNA(Asn). Reaction proceeds in two steps: L-aspartate is first activated by ATP to form Asp-AMP and then transferred to the acceptor end of tRNA(Asp/Asn). The sequence is that of Aspartate--tRNA(Asp/Asn) ligase from Legionella pneumophila (strain Paris).